We begin with the raw amino-acid sequence, 413 residues long: Tyrosine--tRNA ligase (413 aa).

The 'HIGH' region motif lies at 57–66 (PTAPDIHLGH). The short motif at 241 to 245 (KMSKS) is the 'KMSKS' region element. Lys-244 contributes to the ATP binding site. The S4 RNA-binding domain maps to 351 to 412 (VWLPRLMVQA…GKRKFARLHT (62 aa)).

Belongs to the class-I aminoacyl-tRNA synthetase family. TyrS type 2 subfamily. As to quaternary structure, homodimer.

Its subcellular location is the cytoplasm. It catalyses the reaction tRNA(Tyr) + L-tyrosine + ATP = L-tyrosyl-tRNA(Tyr) + AMP + diphosphate + H(+). Catalyzes the attachment of tyrosine to tRNA(Tyr) in a two-step reaction: tyrosine is first activated by ATP to form Tyr-AMP and then transferred to the acceptor end of tRNA(Tyr). The chain is Tyrosine--tRNA ligase from Moorella thermoacetica (strain ATCC 39073 / JCM 9320).